Reading from the N-terminus, the 465-residue chain is Ribulose bisphosphate carboxylase large chain (465 aa).

Lys-4 bears the N6,N6,N6-trimethyllysine mark. Substrate-binding residues include Asn-113 and Thr-163. Catalysis depends on Lys-165, which acts as the Proton acceptor. Lys-167 serves as a coordination point for substrate. Mg(2+) contacts are provided by Lys-191, Asp-193, and Glu-194. Lys-191 bears the N6-carboxylysine mark. His-284 (proton acceptor) is an active-site residue. Substrate is bound by residues Arg-285, His-317, and Ser-369.

This sequence belongs to the RuBisCO large chain family. Type I subfamily. Heterohexadecamer of 8 large chains and 8 small chains; disulfide-linked. The disulfide link is formed within the large subunit homodimers. The cofactor is Mg(2+). In terms of processing, the disulfide bond which can form in the large chain dimeric partners within the hexadecamer appears to be associated with oxidative stress and protein turnover.

Its subcellular location is the plastid. The protein resides in the chloroplast. It carries out the reaction 2 (2R)-3-phosphoglycerate + 2 H(+) = D-ribulose 1,5-bisphosphate + CO2 + H2O. It catalyses the reaction D-ribulose 1,5-bisphosphate + O2 = 2-phosphoglycolate + (2R)-3-phosphoglycerate + 2 H(+). RuBisCO catalyzes two reactions: the carboxylation of D-ribulose 1,5-bisphosphate, the primary event in carbon dioxide fixation, as well as the oxidative fragmentation of the pentose substrate in the photorespiration process. Both reactions occur simultaneously and in competition at the same active site. The protein is Ribulose bisphosphate carboxylase large chain of Morus rubra (Red mulberry).